We begin with the raw amino-acid sequence, 82 residues long: RNA-binding protein Hfq (82 aa).

Positions 10-70 (DLFLNTVRKS…ISTIMPSQPV (61 aa)) constitute a Sm domain.

It belongs to the Hfq family. As to quaternary structure, homohexamer.

RNA chaperone that binds small regulatory RNA (sRNAs) and mRNAs to facilitate mRNA translational regulation in response to envelope stress, environmental stress and changes in metabolite concentrations. Also binds with high specificity to tRNAs. The polypeptide is RNA-binding protein Hfq (Chelativorans sp. (strain BNC1)).